The following is a 20-amino-acid chain: Kassinatuerin-2 (20 aa).

I20 carries the isoleucine amide modification.

Expressed by the skin dorsal glands.

The protein resides in the secreted. In terms of biological role, has no antimicrobial activities against bacteria (E.coli and S.aureus) nor against the fungus C.albicans. This Kassina senegalensis (Senegal running frog) protein is Kassinatuerin-2.